The sequence spans 84 residues: Large ribosomal subunit protein bL27 (84 aa).

The interval 1–20 is disordered; that stretch reads MAHKKAGGSTRNGRDSNPKY.

This sequence belongs to the bacterial ribosomal protein bL27 family.

This is Large ribosomal subunit protein bL27 from Francisella philomiragia subsp. philomiragia (strain ATCC 25017 / CCUG 19701 / FSC 153 / O#319-036).